The following is a 111-amino-acid chain: Nucleoid-associated protein glr3498 (111 aa).

Belongs to the YbaB/EbfC family. Homodimer.

The protein localises to the cytoplasm. It localises to the nucleoid. Binds to DNA and alters its conformation. May be involved in regulation of gene expression, nucleoid organization and DNA protection. This chain is Nucleoid-associated protein glr3498, found in Gloeobacter violaceus (strain ATCC 29082 / PCC 7421).